The primary structure comprises 83 residues: Heterin-1 (83 aa).

The first 22 residues, Met1–Ala22, serve as a signal peptide directing secretion. Residues Val66–Pro83 constitute a propeptide that is removed on maturation.

It belongs to the non-disulfide-bridged peptide (NDBP) superfamily. Long chain multifunctional peptide (group 2) family. Expressed by the venom gland.

The protein localises to the secreted. It localises to the target cell membrane. In terms of biological role, amphipathic peptide with potent activities against both Gram-positive and Gram-negative bacteria. Is the most active against the two Gram-positive Bacillus megaterium and Micrococcus luteus (MIC=4.0 uM for both). It has relatively low hemolytic activity against human erythrocytes. This chain is Heterin-1, found in Heterometrus spinifer (Asia giant forest scorpion).